Here is a 625-residue protein sequence, read N- to C-terminus: Protein SUPPRESSOR OF GENE SILENCING 3 (625 aa).

Disordered regions lie at residues 1–20 (MSSRAGPMSKEKNVQGGYRP), 30–148 (AGTR…SAQH), and 161–195 (VDNASEEENDSDALDDSDDDLASDDYDSDVSQKSH). Positions 54–70 (KPGNTSGKTWVSQNSNP) are enriched in polar residues. Positions 80-94 (GRGSNVSGRGNNVSG) are enriched in low complexity. A compositionally biased stretch (acidic residues) spans 161-188 (VDNASEEENDSDALDDSDDDLASDDYDS). Coiled coils occupy residues 452–533 (KNKL…QQQE) and 564–615 (IEFQ…EQLM).

It belongs to the SGS3 family. Interacts with begomoviruses protein V2. Interacts with SGIP1 in cytoplasmic granules.

The protein localises to the cytoplasm. The protein resides in the perinuclear region. Its subcellular location is the cytoplasmic granule. Functionally, required for post-transcriptional gene silencing and natural virus resistance. May bind nucleic acids and is essential for the biogenesis of trans-acting siRNAs but is not required for silencing induced by IR-PTGS. Involved in the juvenile-to-adult transition regulation. In case of begomoviruses infection, it is targeted by the viral protein V2 leading to suppression of post-transcriptional gene silencing. Involved in the mechanisms necessary for quick response to heat and subsequent heritable transgenerational memory of heat acclimation (global warming) such as early flowering and attenuated immunity; this process includes epigenetic regulation as well as post-transcriptional gene silencing (PTGS). In response to heat, HSFA2 is activated and promotes the expression of REF6 which in turn derepresses HSFA2, thus establishing an inheritable feedback loop able to trigger SGIP1 and subsequent SGIP1-mediated SGS3 degradation; this prevents the biosynthesis of trans-acting siRNA (tasiRNA) and leads to the release of HTT5, which drives early flowering but attenuates immunity. The chain is Protein SUPPRESSOR OF GENE SILENCING 3 from Arabidopsis thaliana (Mouse-ear cress).